We begin with the raw amino-acid sequence, 334 residues long: N-acetyl-S-alkylcysteine monooxygenase (334 aa).

To bacterial alkanal monooxygenase alpha and beta chains.

The catalysed reaction is N-acetyl-S-benzyl-L-cysteine + FMNH2 + O2 = (R)-N-acetyl-S-benzyl-L-cysteine sulfoxide + FMN + H2O + H(+). The enzyme catalyses N-acetyl-S-methyl-L-cysteine + FMNH2 + O2 = (R)-N-acetyl-S-methyl-L-cysteine sulfoxide + FMN + H2O + H(+). It functions in the pathway amino-acid metabolism. In terms of biological role, involved in a cysteine salvage pathway from S-alkylcysteine. Catalyzes the oxidation of N-acetyl-S-benzyl-L-cysteine and N-acetyl-S-methyl-L-cysteine to (R)-N-acetyl-S-benzyl-L-cysteine sulfoxide and (R)-N-acetyl-S-methyl-L-cysteine sulfoxide, respectively. This pathway is likely important in the catabolism of alkylated cysteine generated by proteolysis of alkylated glutathione formed in the detoxification of a wide range of electrophiles. The protein is N-acetyl-S-alkylcysteine monooxygenase of Bacillus subtilis (strain 168).